Here is a 156-residue protein sequence, read N- to C-terminus: Small ribosomal subunit protein uS7 (156 aa).

It belongs to the universal ribosomal protein uS7 family. As to quaternary structure, part of the 30S ribosomal subunit. Contacts proteins S9 and S11.

In terms of biological role, one of the primary rRNA binding proteins, it binds directly to 16S rRNA where it nucleates assembly of the head domain of the 30S subunit. Is located at the subunit interface close to the decoding center, probably blocks exit of the E-site tRNA. The polypeptide is Small ribosomal subunit protein uS7 (Mesorhizobium japonicum (strain LMG 29417 / CECT 9101 / MAFF 303099) (Mesorhizobium loti (strain MAFF 303099))).